Here is a 465-residue protein sequence, read N- to C-terminus: Neuraminidase (465 aa).

Residues 1 to 11 are Intravirion-facing; it reads MLPSTIQTLTL. A helical membrane pass occupies residues 12 to 34; sequence FLTSGGVLLSLYVSASLSYLLYS. The interval 13–35 is involved in apical transport and lipid raft association; it reads LTSGGVLLSLYVSASLSYLLYSD. Residues 35-465 lie on the Virion surface side of the membrane; the sequence is DILLKFSSKI…DTVTGVDMAL (431 aa). Residues 38–85 form a hypervariable stalk region region; it reads LKFSSKITAPTMTLDCANASNVQAVNRSATKEMTFLLPEPEWTYPRLS. N-linked (GlcNAc...) asparagine; by host glycans are attached at residues asparagine 55 and asparagine 63. Cystine bridges form between cysteine 86–cysteine 419, cysteine 121–cysteine 126, cysteine 181–cysteine 228, cysteine 230–cysteine 235, cysteine 276–cysteine 290, cysteine 278–cysteine 288, cysteine 317–cysteine 336, and cysteine 423–cysteine 446. The head of neuraminidase stretch occupies residues 88-465; it reads GSTFQKALLI…DTVTGVDMAL (378 aa). Position 115 (arginine 115) interacts with substrate. N-linked (GlcNAc...) asparagine; by host glycosylation occurs at asparagine 143. Aspartate 148 functions as the Proton donor/acceptor in the catalytic mechanism. Residue arginine 149 participates in substrate binding. 274–275 is a substrate binding site; sequence EE. An N-linked (GlcNAc...) asparagine; by host glycan is attached at asparagine 283. Position 291 (arginine 291) interacts with substrate. Residues aspartate 292, threonine 296, aspartate 323, glycine 343, and glycine 345 each contribute to the Ca(2+) site. Arginine 373 serves as a coordination point for substrate. Residue tyrosine 408 is the Nucleophile of the active site.

The protein belongs to the glycosyl hydrolase 34 family. In terms of assembly, homotetramer. It depends on Ca(2+) as a cofactor. Post-translationally, N-glycosylated.

The protein localises to the virion membrane. It localises to the host apical cell membrane. It catalyses the reaction Hydrolysis of alpha-(2-&gt;3)-, alpha-(2-&gt;6)-, alpha-(2-&gt;8)- glycosidic linkages of terminal sialic acid residues in oligosaccharides, glycoproteins, glycolipids, colominic acid and synthetic substrates.. Inhibited by the neuraminidase inhibitors zanamivir (Relenza) and oseltamivir (Tamiflu). These drugs interfere with the release of progeny virus from infected cells and are effective against all influenza strains. Resistance to neuraminidase inhibitors is quite rare. Catalyzes the removal of terminal sialic acid residues from viral and cellular glycoconjugates. Cleaves off the terminal sialic acids on the glycosylated HA during virus budding to facilitate virus release. Additionally helps virus spread through the circulation by further removing sialic acids from the cell surface. These cleavages prevent self-aggregation and ensure the efficient spread of the progeny virus from cell to cell. Otherwise, infection would be limited to one round of replication. Described as a receptor-destroying enzyme because it cleaves a terminal sialic acid from the cellular receptors. May facilitate viral invasion of the upper airways by cleaving the sialic acid moieties on the mucin of the airway epithelial cells. Likely to plays a role in the budding process through its association with lipid rafts during intracellular transport. May additionally display a raft-association independent effect on budding. Plays a role in the determination of host range restriction on replication and virulence. Sialidase activity in late endosome/lysosome traffic seems to enhance virus replication. This chain is Neuraminidase, found in Influenza B virus (strain B/Beijing/1/1987).